A 127-amino-acid chain; its full sequence is Large ribosomal subunit protein bL12 (127 aa).

This sequence belongs to the bacterial ribosomal protein bL12 family. Homodimer. Part of the ribosomal stalk of the 50S ribosomal subunit. Forms a multimeric L10(L12)X complex, where L10 forms an elongated spine to which 2 to 4 L12 dimers bind in a sequential fashion. Binds GTP-bound translation factors.

In terms of biological role, forms part of the ribosomal stalk which helps the ribosome interact with GTP-bound translation factors. Is thus essential for accurate translation. This is Large ribosomal subunit protein bL12 from Pelobacter propionicus (strain DSM 2379 / NBRC 103807 / OttBd1).